Here is a 501-residue protein sequence, read N- to C-terminus: Flagellin (501 aa).

The protein belongs to the bacterial flagellin family.

It localises to the secreted. The protein resides in the bacterial flagellum. Its function is as follows. Flagellin is the subunit protein which polymerizes to form the filaments of bacterial flagella. The protein is Flagellin (flaA) of Aquifex pyrophilus.